Here is a 252-residue protein sequence, read N- to C-terminus: NADP-dependent (R)-specific alcohol dehydrogenase (252 aa).

NADP(+) is bound by residues Thr-16–Ile-19, Arg-39–His-40, Asp-63–Ala-64, Asn-90, Tyr-156, Lys-160, and Ile-191–Leu-195. Tyr-156 (proton donor/acceptor) is an active-site residue. Gln-252 contributes to the Mg(2+) binding site.

The protein belongs to the short-chain dehydrogenases/reductases (SDR) family. Homotetramer. Mg(2+) serves as cofactor.

It carries out the reaction a secondary alcohol + NADP(+) = a ketone + NADPH + H(+). The enzyme catalyses acetophenone + NADPH + H(+) = (R)-1-phenylethanol + NADP(+). It catalyses the reaction 2,5-hexanedione + 2 NADPH + 2 H(+) = (2R,5R)-hexanediol + 2 NADP(+). The catalysed reaction is ethyl 3-oxobutanoate + NADPH + H(+) = ethyl (R)-3-hydroxybutanoate + NADP(+). It carries out the reaction 2-octanone + NADPH + H(+) = (2R)-octan-2-ol + NADP(+). NADP-dependent (R)-specific alcohol dehydrogenase (ADH) with a broad substrate specificity, able to catalyze in vitro the stereoselective reduction of several aliphatic and aromatic ketones as well as beta-keto esters to the corresponding enantiomerically pure alcohols. The sequence is that of NADP-dependent (R)-specific alcohol dehydrogenase from Lentilactobacillus kefiri (Lactobacillus kefiri).